The chain runs to 647 residues: DNA mismatch repair protein MutL (647 aa).

The segment at 389–423 (SESSVSSVANKQQPTVKQAKRSADDSDSEHGKLDY) is disordered. A compositionally biased stretch (basic and acidic residues) spans 409-423 (RSADDSDSEHGKLDY).

It belongs to the DNA mismatch repair MutL/HexB family.

This protein is involved in the repair of mismatches in DNA. It is required for dam-dependent methyl-directed DNA mismatch repair. May act as a 'molecular matchmaker', a protein that promotes the formation of a stable complex between two or more DNA-binding proteins in an ATP-dependent manner without itself being part of a final effector complex. This is DNA mismatch repair protein MutL from Streptococcus thermophilus (strain ATCC BAA-491 / LMD-9).